We begin with the raw amino-acid sequence, 787 residues long: ABC transporter G family member 5 (787 aa).

The span at Met1 to Pro17 shows a compositional bias: basic and acidic residues. Disordered stretches follow at residues Met1 to Pro25 and Asn71 to Pro116. Residues Arg74–Arg85 show a composition bias toward polar residues. One can recognise an ABC transporter domain in the interval Leu121 to Asp382. Gly175–Ser182 is an ATP binding site. In terms of domain architecture, ABC transmembrane type-2 spans Gly484 to Phe691. A run of 8 helical transmembrane segments spans residues Val500 to Trp520, Phe535 to Leu555, Val576 to Leu596, Phe599 to Leu619, Ala620 to Met640, Leu641 to Ile661, Ser728 to Phe745, and Leu760 to Leu780.

This sequence belongs to the ABC transporter superfamily. ABCG family. Eye pigment precursor importer (TC 3.A.1.204) subfamily. Expressed in the crown root primordia, endodermis, pericycle and stele in the root, in leaf primordia of main and axillary shoots, and in the vascular cells and leaf epidermis of older leaves.

It localises to the cell membrane. In terms of biological role, essential transporter for growth and development under abiotic stress. Mediates shoot branching by promoting the outgrowth of lateral shoots. Required for salt tolerance via Na/K homeostasis, at least partly by regulating SKC1/OsHKT1;5. Necessary for hypodermal suberization of roots, which contributes to formation of the apoplastic barrier. The chain is ABC transporter G family member 5 from Oryza sativa subsp. japonica (Rice).